The primary structure comprises 272 residues: Hydroxyethylthiazole kinase (272 aa).

A substrate-binding site is contributed by Met-62. Residues Arg-138 and Thr-183 each coordinate ATP. Gly-210 is a binding site for substrate.

This sequence belongs to the Thz kinase family. Mg(2+) serves as cofactor.

It carries out the reaction 5-(2-hydroxyethyl)-4-methylthiazole + ATP = 4-methyl-5-(2-phosphooxyethyl)-thiazole + ADP + H(+). Its pathway is cofactor biosynthesis; thiamine diphosphate biosynthesis; 4-methyl-5-(2-phosphoethyl)-thiazole from 5-(2-hydroxyethyl)-4-methylthiazole: step 1/1. Catalyzes the phosphorylation of the hydroxyl group of 4-methyl-5-beta-hydroxyethylthiazole (THZ). The polypeptide is Hydroxyethylthiazole kinase (Dichelobacter nodosus (strain VCS1703A)).